The sequence spans 282 residues: MATYLIGDVHGCYDELIALLHKVEFTPGKDTLWLTGDLVARGPGSLDVLRYVKSLGDSVRLVLGNHDLHLLAVFAGISRNKPKDRLTPLLEAPDADELLNWLRRQPLLQIDEEKKLVMAHAGITPQWDLQTAKECARDVEAVLSSDSYPFFLDAMYGDMPNNWSPELRGLGRLRFITNAFTRMRFCFPNGQLDMYSKESPEEAPAPLKPWFAIPGPVAEEYSIAFGHWASLEGKGTPEGIYALDTGCCWGGTLTCLRWEDKQYFVQPSNRHKDMGEGEAAAS.

This sequence belongs to the Ap4A hydrolase family.

It catalyses the reaction P(1),P(4)-bis(5'-adenosyl) tetraphosphate + H2O = 2 ADP + 2 H(+). In terms of biological role, hydrolyzes diadenosine 5',5'''-P1,P4-tetraphosphate to yield ADP. In Escherichia coli O7:K1 (strain IAI39 / ExPEC), this protein is Bis(5'-nucleosyl)-tetraphosphatase, symmetrical.